The primary structure comprises 435 residues: Mitochondrial distribution and morphology protein 12 (435 aa).

The SMP-LTD domain maps to M1 to V435. 2 disordered regions span residues D73 to H113 and W186 to E268. The span at T96 to H113 shows a compositional bias: basic and acidic residues. A compositionally biased stretch (low complexity) spans S218–S238. Basic and acidic residues predominate over residues H251–E268.

This sequence belongs to the MDM12 family. Component of the ER-mitochondria encounter structure (ERMES) or MDM complex, composed of mmm1, mdm10, mdm12 and mdm34. A mmm1 homodimer associates with one molecule of mdm12 on each side in a pairwise head-to-tail manner, and the SMP-LTD domains of mmm1 and mdm12 generate a continuous hydrophobic tunnel for phospholipid trafficking.

It localises to the mitochondrion outer membrane. It is found in the endoplasmic reticulum membrane. Functionally, component of the ERMES/MDM complex, which serves as a molecular tether to connect the endoplasmic reticulum (ER) and mitochondria. Components of this complex are involved in the control of mitochondrial shape and protein biogenesis, and function in nonvesicular lipid trafficking between the ER and mitochondria. Mdm12 is required for the interaction of the ER-resident membrane protein mmm1 and the outer mitochondrial membrane-resident beta-barrel protein mdm10. The mdm12-mmm1 subcomplex functions in the major beta-barrel assembly pathway that is responsible for biogenesis of all mitochondrial outer membrane beta-barrel proteins, and acts in a late step after the SAM complex. The mdm10-mdm12-mmm1 subcomplex further acts in the TOM40-specific pathway after the action of the mdm12-mmm1 complex. Essential for establishing and maintaining the structure of mitochondria and maintenance of mtDNA nucleoids. This chain is Mitochondrial distribution and morphology protein 12, found in Aspergillus niger (strain ATCC MYA-4892 / CBS 513.88 / FGSC A1513).